An 891-amino-acid polypeptide reads, in one-letter code: Protein kinase kin1 (891 aa).

The tract at residues 65-116 (GYISPSSQSPHHGPVRSPSSRKPLPASPSRTRDHSLRVPVSGHSYSADEKPR) is disordered. In terms of domain architecture, Protein kinase spans 125–395 (YVLGKTIGAG…LEEVLNHPWM (271 aa)). ATP is bound by residues 131 to 139 (IGAGSMGKV) and Lys154. Asp266 serves as the catalytic Proton acceptor. Thr528 carries the post-translational modification Phosphothreonine. 3 disordered regions span residues 528–699 (TPVS…RNNR), 728–747 (TMGN…TDKL), and 805–841 (TPTK…LDDN). 2 stretches are compositionally biased toward low complexity: residues 529–538 (PVSSVPSSPV) and 583–603 (HSPS…IFRR). A phosphoserine mark is found at Ser535 and Ser536. 5 stretches are compositionally biased toward polar residues: residues 612-629 (KSST…TSQS), 649-659 (LVTQSAIGRST), 669-699 (ISSQ…RNNR), 728-742 (TMGN…SPSK), and 820-829 (YGSNSTTDSY). The 50-residue stretch at 842–891 (GESPASNLAFEIYIVKVPILSLRGVSFHRISGNSWQYKTLASRILNELKL) folds into the KA1 domain.

It belongs to the protein kinase superfamily. Ser/Thr protein kinase family.

Its subcellular location is the cytoplasm. The enzyme catalyses L-seryl-[protein] + ATP = O-phospho-L-seryl-[protein] + ADP + H(+). It catalyses the reaction L-threonyl-[protein] + ATP = O-phospho-L-threonyl-[protein] + ADP + H(+). Has a role in establishing the characteristic rod cell shape. Important for cell polarity and is involved in directing growth to the cell ends. This chain is Protein kinase kin1 (kin1), found in Schizosaccharomyces pombe (strain 972 / ATCC 24843) (Fission yeast).